Consider the following 374-residue polypeptide: Queuine tRNA-ribosyltransferase (374 aa).

Asp-91 serves as the catalytic Proton acceptor. Substrate is bound by residues 91-95 (DSGGY), Asp-145, Gln-189, and Gly-216. The RNA binding stretch occupies residues 247 to 253 (GVGTVPD). Catalysis depends on Asp-266, which acts as the Nucleophile. The segment at 271–275 (TRNAR) is RNA binding; important for wobble base 34 recognition. Positions 304, 306, 309, and 335 each coordinate Zn(2+).

It belongs to the queuine tRNA-ribosyltransferase family. As to quaternary structure, homodimer. Within each dimer, one monomer is responsible for RNA recognition and catalysis, while the other monomer binds to the replacement base PreQ1. It depends on Zn(2+) as a cofactor.

It carries out the reaction 7-aminomethyl-7-carbaguanine + guanosine(34) in tRNA = 7-aminomethyl-7-carbaguanosine(34) in tRNA + guanine. The protein operates within tRNA modification; tRNA-queuosine biosynthesis. Catalyzes the base-exchange of a guanine (G) residue with the queuine precursor 7-aminomethyl-7-deazaguanine (PreQ1) at position 34 (anticodon wobble position) in tRNAs with GU(N) anticodons (tRNA-Asp, -Asn, -His and -Tyr). Catalysis occurs through a double-displacement mechanism. The nucleophile active site attacks the C1' of nucleotide 34 to detach the guanine base from the RNA, forming a covalent enzyme-RNA intermediate. The proton acceptor active site deprotonates the incoming PreQ1, allowing a nucleophilic attack on the C1' of the ribose to form the product. After dissociation, two additional enzymatic reactions on the tRNA convert PreQ1 to queuine (Q), resulting in the hypermodified nucleoside queuosine (7-(((4,5-cis-dihydroxy-2-cyclopenten-1-yl)amino)methyl)-7-deazaguanosine). The sequence is that of Queuine tRNA-ribosyltransferase from Leptospira borgpetersenii serovar Hardjo-bovis (strain JB197).